The following is a 302-amino-acid chain: tRNA-cytidine(32) 2-sulfurtransferase (302 aa).

Residues 43–48 carry the PP-loop motif motif; that stretch reads SGGKDS. Residues Cys-118, Cys-121, and Cys-209 each coordinate [4Fe-4S] cluster.

The protein belongs to the TtcA family. Homodimer. It depends on Mg(2+) as a cofactor. [4Fe-4S] cluster is required as a cofactor.

It localises to the cytoplasm. It catalyses the reaction cytidine(32) in tRNA + S-sulfanyl-L-cysteinyl-[cysteine desulfurase] + AH2 + ATP = 2-thiocytidine(32) in tRNA + L-cysteinyl-[cysteine desulfurase] + A + AMP + diphosphate + H(+). It participates in tRNA modification. Its function is as follows. Catalyzes the ATP-dependent 2-thiolation of cytidine in position 32 of tRNA, to form 2-thiocytidine (s(2)C32). The sulfur atoms are provided by the cysteine/cysteine desulfurase (IscS) system. In Polynucleobacter asymbioticus (strain DSM 18221 / CIP 109841 / QLW-P1DMWA-1) (Polynucleobacter necessarius subsp. asymbioticus), this protein is tRNA-cytidine(32) 2-sulfurtransferase.